A 326-amino-acid chain; its full sequence is GTPase IMAP family member 5 (326 aa).

At 1–297 (MEDHGFEELS…MLCRVTSCLD (297 aa)) the chain is on the cytoplasmic side. The AIG1-type G domain maps to 42 to 245 (SGLLRILLVG…HSNDLFVYTQ (204 aa)). GTP-binding positions include 51–59 (GKSGCGKSA), serine 72, 169–171 (HKE), and asparagine 206. The chain crosses the membrane as a helical; Anchor for type IV membrane protein span at residues 298–318 (WHIAVSVLLIVLGLTLLITLI). At 319–326 (NMYIGRWK) the chain is on the lumenal side.

It belongs to the TRAFAC class TrmE-Era-EngA-EngB-Septin-like GTPase superfamily. AIG1/Toc34/Toc159-like paraseptin GTPase family. IAN subfamily. Interacts with BAD, BAK1, BAX, BCL2, BCL2L1/Bcl-xL and BCL2L11/BimEL. The interaction with BAX is increased, when cells initiate apoptosis upon IL2 withdrawal. Forms a complex with BCL2L1 or MCL1 and HSPA8/HSC70; the interaction between HSPA8 and BCL2L1 or MCL1 is impaired in the absence of GIMAP5. May interact (via N-terminus) with microtubules. Primarily expressed in spleen, heart, lung and intestine and, at lower levels, in kidney, stomach and muscle. Expressed in thymus and lymph nodes (at protein level). In the spleen, expressed in periarteriolar lymphatic sheets. Isoform 2: Expressed at higher levels in T lymphocytes compared to isoform 1.

The protein resides in the lysosome membrane. Its subcellular location is the endosome. The protein localises to the multivesicular body membrane. It localises to the endosome membrane. Required for mitochondrial integrity and T-cell survival. May contribute to T-cell quiescence. Its function is as follows. Plays a role in T lymphocyte development and the optimal generation of CD4/CD8 double-positive thymocytes. Inhibitor of GSK3A, possibly by sequestering GSK3A in cytoplasmic vesicles and impairing its translocation to the nucleus. Consequently, impairs GSK3A-dependent transcriptional program and regulation of the DNA damage response occurring during T cells proliferation. Required for the survival of peripheral T cells, natural killer (NK) and NK T-cell development and the maintenance of normal liver function. Promotes the survival of quiescent T-cells. May regulate Ca(2+) homeostasis by modulating lysosomal Ca(2+) stores, preventing its accumulation in the absence of T cell activation. May play a role in mitochondrial DNA segregation in hematopoietic tissues. Is a regulator of liver endothelial cell homeostasis. The protein is GTPase IMAP family member 5 (Gimap5) of Rattus norvegicus (Rat).